The sequence spans 250 residues: uncharacterized protein (250 aa).

Positions 1–19 are cleaved as a signal peptide; that stretch reads MAKPRNAAESKAAKAQANA. 2 helical membrane passes run 51–71 and 73–93; these read IGAF…AGGF and MFTM…VIFG. Residues 226 to 250 are disordered; the sequence is AGVMPKGPLPTTAKMRSVQRTVRRK.

The protein resides in the cell membrane. This is an uncharacterized protein from Mycobacterium tuberculosis (strain CDC 1551 / Oshkosh).